The primary structure comprises 568 residues: Potassium-transporting ATPase potassium-binding subunit (568 aa).

Transmembrane regions (helical) follow at residues 3–23 (TEVLGVIAQIVLMVVLSYPLG), 68–88 (LLVVNLFWFLWGMVLLVTQGV), 133–153 (FVIMLFQFITAATGMAAMAGI), 180–200 (LLPLSLVVGFILIVQGTPMGF), 256–276 (VECWSILIIPMAMAFAFGFYL), 281–301 (LGYSIYGVMLFAYLVGVCINV), 375–395 (FGGVGVGWMNYFTFIIIAVFI), 421–441 (IVALLHPFIILVGTALAAYLF), 497–517 (IVLILGRFVPIVGQVAIAGIL), and 535–555 (VTFGVMTFAVIFIVAALSFFP).

This sequence belongs to the KdpA family. In terms of assembly, the system is composed of three essential subunits: KdpA, KdpB and KdpC.

Its subcellular location is the cell inner membrane. Its function is as follows. Part of the high-affinity ATP-driven potassium transport (or Kdp) system, which catalyzes the hydrolysis of ATP coupled with the electrogenic transport of potassium into the cytoplasm. This subunit binds the periplasmic potassium ions and delivers the ions to the membrane domain of KdpB through an intramembrane tunnel. This is Potassium-transporting ATPase potassium-binding subunit from Phocaeicola vulgatus (strain ATCC 8482 / DSM 1447 / JCM 5826 / CCUG 4940 / NBRC 14291 / NCTC 11154) (Bacteroides vulgatus).